Reading from the N-terminus, the 266-residue chain is Glutamate racemase (266 aa).

Substrate contacts are provided by residues 9–10 (DS) and 41–42 (YG). Residue C73 is the Proton donor/acceptor of the active site. Residue 74 to 75 (NT) coordinates substrate. C183 serves as the catalytic Proton donor/acceptor. Residue 184–185 (TH) coordinates substrate.

The protein belongs to the aspartate/glutamate racemases family.

The enzyme catalyses L-glutamate = D-glutamate. The protein operates within cell wall biogenesis; peptidoglycan biosynthesis. Functionally, provides the (R)-glutamate required for cell wall biosynthesis. This Shewanella woodyi (strain ATCC 51908 / MS32) protein is Glutamate racemase.